The following is a 275-amino-acid chain: Ribosomal RNA small subunit methyltransferase A (275 aa).

Residues Asn19, Leu21, Gly46, Glu71, Asp94, and Asn117 each contribute to the S-adenosyl-L-methionine site.

Belongs to the class I-like SAM-binding methyltransferase superfamily. rRNA adenine N(6)-methyltransferase family. RsmA subfamily.

It is found in the cytoplasm. It catalyses the reaction adenosine(1518)/adenosine(1519) in 16S rRNA + 4 S-adenosyl-L-methionine = N(6)-dimethyladenosine(1518)/N(6)-dimethyladenosine(1519) in 16S rRNA + 4 S-adenosyl-L-homocysteine + 4 H(+). Specifically dimethylates two adjacent adenosines (A1518 and A1519) in the loop of a conserved hairpin near the 3'-end of 16S rRNA in the 30S particle. May play a critical role in biogenesis of 30S subunits. The polypeptide is Ribosomal RNA small subunit methyltransferase A (Burkholderia lata (strain ATCC 17760 / DSM 23089 / LMG 22485 / NCIMB 9086 / R18194 / 383)).